The primary structure comprises 118 residues: uncharacterized protein (118 aa).

The segment at 1–118 (MASARGAKQS…AARQNEKTAR (118 aa)) is disordered. Positions 13–28 (RVGTTRYTETSTVRVE) are enriched in low complexity. The span at 29 to 49 (TSSHRVETSSRRVETSQRRSE) shows a compositional bias: basic and acidic residues.

This is an uncharacterized protein from Homo sapiens (Human).